The following is a 429-amino-acid chain: UDP-N-acetylglucosamine 1-carboxyvinyltransferase (429 aa).

Phosphoenolpyruvate is bound at residue 22-23 (KN). Residue Arg102 participates in UDP-N-acetyl-alpha-D-glucosamine binding. Catalysis depends on Cys126, which acts as the Proton donor. Residue Cys126 is modified to 2-(S-cysteinyl)pyruvic acid O-phosphothioketal. Residues 131–135 (RPVDL), Asp316, and Ile338 each bind UDP-N-acetyl-alpha-D-glucosamine.

The protein belongs to the EPSP synthase family. MurA subfamily.

Its subcellular location is the cytoplasm. It catalyses the reaction phosphoenolpyruvate + UDP-N-acetyl-alpha-D-glucosamine = UDP-N-acetyl-3-O-(1-carboxyvinyl)-alpha-D-glucosamine + phosphate. The protein operates within cell wall biogenesis; peptidoglycan biosynthesis. Its function is as follows. Cell wall formation. Adds enolpyruvyl to UDP-N-acetylglucosamine. This chain is UDP-N-acetylglucosamine 1-carboxyvinyltransferase, found in Rhodopseudomonas palustris (strain TIE-1).